Reading from the N-terminus, the 340-residue chain is Dual specificity protein phosphatase 12 (340 aa).

Met-1 carries the N-acetylmethionine modification. The Tyrosine-protein phosphatase domain maps to 26 to 171 (QMLEVQPGLY…LKLYQAMGYE (146 aa)). Residue Cys-115 is the Phosphocysteine intermediate of the active site. 116-121 (HAGVSR) contacts substrate. Ser-335 carries the phosphoserine modification.

It belongs to the protein-tyrosine phosphatase family. Non-receptor class dual specificity subfamily. In terms of assembly, monomer. Zn(2+) serves as cofactor. Ubiquitous, highest expression in spleen, testis, ovary, and peripheral blood leukocytes and lower expression in liver and lung.

It localises to the nucleus. It is found in the cytoplasm. The protein localises to the cytosol. It carries out the reaction O-phospho-L-tyrosyl-[protein] + H2O = L-tyrosyl-[protein] + phosphate. The enzyme catalyses O-phospho-L-seryl-[protein] + H2O = L-seryl-[protein] + phosphate. The catalysed reaction is O-phospho-L-threonyl-[protein] + H2O = L-threonyl-[protein] + phosphate. Dual specificity phosphatase; can dephosphorylate both phosphotyrosine and phosphoserine or phosphothreonine residues. Can dephosphorylate glucokinase (in vitro). Has phosphatase activity with the synthetic substrate 6,8-difluoro-4-methylumbelliferyl phosphate and other in vitro substrates. This Homo sapiens (Human) protein is Dual specificity protein phosphatase 12 (DUSP12).